A 939-amino-acid chain; its full sequence is Aconitate hydratase A (939 aa).

The interval 433-453 (GSGESLATGAEGRPSKPVTVA) is disordered. The [4Fe-4S] cluster site is built by Cys-475, Cys-541, and Cys-544.

Belongs to the aconitase/IPM isomerase family. In terms of assembly, monomer. [4Fe-4S] cluster is required as a cofactor.

It carries out the reaction citrate = D-threo-isocitrate. The enzyme catalyses (2S,3R)-3-hydroxybutane-1,2,3-tricarboxylate = 2-methyl-cis-aconitate + H2O. It functions in the pathway carbohydrate metabolism; tricarboxylic acid cycle; isocitrate from oxaloacetate: step 2/2. The protein operates within organic acid metabolism; propanoate degradation. In terms of biological role, involved in the catabolism of short chain fatty acids (SCFA) via the tricarboxylic acid (TCA)(acetyl degradation route) and probably via the 2-methylcitrate cycle I (propionate degradation route). Catalyzes the reversible isomerization of citrate to isocitrate via cis-aconitate. Could catalyze the hydration of 2-methyl-cis-aconitate to yield (2R,3S)-2-methylisocitrate. The apo form of AcnA functions as a RNA-binding regulatory protein. The polypeptide is Aconitate hydratase A (acn) (Corynebacterium glutamicum (strain ATCC 13032 / DSM 20300 / JCM 1318 / BCRC 11384 / CCUG 27702 / LMG 3730 / NBRC 12168 / NCIMB 10025 / NRRL B-2784 / 534)).